A 716-amino-acid chain; its full sequence is Protein C-mannosyl-transferase DPY19L3 (716 aa).

Topologically, residues 1–43 are cytoplasmic; sequence MMSIRQRREIRATEVSEDFPAQEENVKLENKLPSGCTSRRLWK. The chain crosses the membrane as a helical span at residues 44 to 64; sequence ILSLTIGGTIALCIGLLTSVY. Residues 65-154 are Lumenal-facing; sequence LATLHENDLW…RVLPVQKYLE (90 aa). The N-linked (GlcNAc...) asparagine glycan is linked to Asn-118. The helical transmembrane segment at 155-182 threads the bilayer; it reads PVYFYIYTLFGLQAIYVTALYITSWLLS. Residues 183–184 lie on the Cytoplasmic side of the membrane; that stretch reads GT. Residues 185 to 197 constitute an intramembrane region (name=3); sequence WLSGLLAAFWYVT. The Cytoplasmic segment spans residues 198–215; it reads NRIDTTRVEFTIPLRENW. Residues 216-230 constitute an intramembrane region (name=4); sequence ALPFFAIQIAAITYF. Topologically, residues 231-239 are cytoplasmic; sequence LRPNLQPLS. A helical transmembrane segment spans residues 240–256; the sequence is ERLTLLAIFISTFLFSL. Topologically, residues 257 to 262 are lumenal; sequence TWQFNQ. Residues 263–279 form a helical membrane-spanning segment; it reads FMMLMQALVLFTLDSLD. Over 280–289 the chain is Cytoplasmic; sequence MLPAVKATWL. The chain crosses the membrane as a helical span at residues 290-306; it reads YGIQITSLLLVCILQFF. The Lumenal portion of the chain corresponds to 307–308; the sequence is NS. The helical transmembrane segment at 309–323 threads the bilayer; it reads MILGSLLISFNLSVF. Residues 324–338 lie on the Cytoplasmic side of the membrane; that stretch reads IARKLQKNLKTGSFL. Residues 339–359 form a helical membrane-spanning segment; sequence NRLGKLLLHLFMVLCLTLFLN. Residues 360 to 414 are Lumenal-facing; it reads NIIKKILNLKSDEHIFKFLKAKFGLGATRDFDANLYLCEEAFGLLPFNTFGRLSD. The chain crosses the membrane as a helical span at residues 415-437; that stretch reads TLLFYAYIFVLSITVIVAFVVAF. Over 438 to 465 the chain is Cytoplasmic; it reads HNLSDSTNQQSVGKMEKGTVDLKPETAY. A helical membrane pass occupies residues 466–485; the sequence is NLIHTILFGFLALSTMRMKY. Over 486 to 487 the chain is Lumenal; that stretch reads LW. The chain crosses the membrane as a helical span at residues 488-499; that stretch reads TSHMCVFASFGL. Residues 500 to 522 lie on the Cytoplasmic side of the membrane; that stretch reads CSPEIWELLLKSVHLYNPKRICI. A helical membrane pass occupies residues 523–539; that stretch reads MRYSVPILILLYLCYKF. The Lumenal portion of the chain corresponds to 540–716; that stretch reads WPGMMDELSE…FHVYKLSRNK (177 aa). Asn-704 carries N-linked (GlcNAc...) asparagine glycosylation.

It belongs to the dpy-19 family.

The protein localises to the endoplasmic reticulum membrane. The enzyme catalyses L-tryptophyl-[protein] + a di-trans,poly-cis-dolichyl beta-D-mannosyl phosphate = C-alpha-D-mannosyl-L-tryptophyl-[protein] + a di-trans,poly-cis-dolichyl phosphate + H(+). The protein operates within protein modification; protein glycosylation. C-mannosyltransferase that mediates C-mannosylation of tryptophan residues on target proteins. The reaction occurs on the luminal side of the endoplasmic reticulum and involves the transfer of a mannose unit from a dolichylphosphate mannose (Dol-P-Man) donor to an acceptor protein containing a WxxW or WxxC consensus sequence. C-mannosylates RSPO1, a Wnt signaling regulator, preferentially at the first Trp residue in the sequence WxxW. C-mannosylates the netrin receptor UNC5A, preferentially at the third tryptophan of WxxWxxWxxC sequence. The sequence is that of Protein C-mannosyl-transferase DPY19L3 (DPY19L3) from Pongo abelii (Sumatran orangutan).